A 480-amino-acid chain; its full sequence is UDP-N-acetylmuramate--L-alanine ligase (480 aa).

122-128 (GTHGKTT) lines the ATP pocket.

Belongs to the MurCDEF family.

The protein resides in the cytoplasm. The enzyme catalyses UDP-N-acetyl-alpha-D-muramate + L-alanine + ATP = UDP-N-acetyl-alpha-D-muramoyl-L-alanine + ADP + phosphate + H(+). It participates in cell wall biogenesis; peptidoglycan biosynthesis. Cell wall formation. In Pseudomonas paraeruginosa (strain DSM 24068 / PA7) (Pseudomonas aeruginosa (strain PA7)), this protein is UDP-N-acetylmuramate--L-alanine ligase.